Here is a 180-residue protein sequence, read N- to C-terminus: Cell division protein SepF (180 aa).

The interval 21-40 is disordered; the sequence is LDDDYDDGRAVGRDDRRAMH. Residues 27-40 show a composition bias toward basic and acidic residues; sequence DGRAVGRDDRRAMH.

Belongs to the SepF family. As to quaternary structure, homodimer. Interacts with FtsZ.

The protein resides in the cytoplasm. Functionally, cell division protein that is part of the divisome complex and is recruited early to the Z-ring. Probably stimulates Z-ring formation, perhaps through the cross-linking of FtsZ protofilaments. Its function overlaps with FtsA. This Frankia casuarinae (strain DSM 45818 / CECT 9043 / HFP020203 / CcI3) protein is Cell division protein SepF.